The primary structure comprises 319 residues: 1-aminocyclopropane-1-carboxylate oxidase (319 aa).

The 101-residue stretch at 153–253 (PTFGTKVSNY…RMSIASFYNP (101 aa)) folds into the Fe2OG dioxygenase domain. Fe cation is bound by residues His-177, Asp-179, and His-234.

It belongs to the iron/ascorbate-dependent oxidoreductase family. It depends on Fe cation as a cofactor.

The catalysed reaction is 1-aminocyclopropane-1-carboxylate + L-ascorbate + O2 = ethene + L-dehydroascorbate + hydrogen cyanide + CO2 + 2 H2O. It functions in the pathway alkene biosynthesis; ethylene biosynthesis via S-adenosyl-L-methionine; ethylene from S-adenosyl-L-methionine: step 2/2. The chain is 1-aminocyclopropane-1-carboxylate oxidase (ACO) from Actinidia deliciosa (Kiwi).